The primary structure comprises 390 residues: Tumor susceptibility gene 101 protein (390 aa).

At Ala2 the chain carries N-acetylalanine. Residues 2 to 145 (AVSESQLKKM…GDEPPVFSRP (144 aa)) enclose the UEV domain. Residues 158–162 (PPNTS) form an interaction with CEP55 region. Residues 198-214 (ATTSSQYPSQPPVTTVG) are compositionally biased toward polar residues. The interval 198 to 220 (ATTSSQYPSQPPVTTVGPSRDGT) is disordered. Thr220 carries the post-translational modification Phosphothreonine. Residues 235–316 (SDKLRWRMKE…NQSENNDIDE (82 aa)) adopt a coiled-coil conformation. The PTAP motif signature appears at 320 to 323 (PTAP). The 69-residue stretch at 322-390 (APLYKQILNL…RKTAGLSDLY (69 aa)) folds into the SB domain.

It belongs to the ubiquitin-conjugating enzyme family. UEV subfamily. As to quaternary structure, component of the ESCRT-I complex (endosomal sorting complex required for transport I) which consists of TSG101, VPS28, a VPS37 protein (VPS37A to -D) and MVB12A or MVB12B in a 1:1:1:1 stoichiometry. Interacts with VPS37A, VPS37B and VPS37C. Interacts with DMAP1. Interacts with ubiquitin. Interacts with stathmin, GMCL and AATF. Component of an ESCRT-I complex (endosomal sorting complex required for transport I) which consists of TSG101, VPS28, VPS37A and UBAP1 in a 1:1:1:1 stoichiometry. Interacts with HGS; the interaction mediates the association with the ESCRT-0 complex. Interacts with GGA1 and GGA3. Interacts (via UEV domain) with PDCD6IP/AIP1. Interacts with VPS28, SNF8 and VPS36. Self-associates. Interacts with MVB12A; the association appears to be mediated by the TSG101-VPS37 binary subcomplex. Interacts with VPS37D. Interacts with LRSAM1. Interacts with CEP55; the interaction is required for cytokinesis but not for viral budding. Interacts with PDCD6. Interacts with LITAF. Interacts with MGRN1. Interacts with ARRDC1; recruits TSG101 to the plasma membrane. In terms of assembly, (Microbial infection) Interacts with HIV-1 p6. (Microbial infection) Interacts with human spumavirus Gag. As to quaternary structure, (Microbial infection) Interacts with HTLV-1 Gag. In terms of assembly, (Microbial infection) Interacts with Ebola virus VP40. (Microbial infection) Interacts with EIAV p9; the interaction has been shown in vitro. As to quaternary structure, (Microbial infection) Interacts with Lassa virus protein Z. In terms of assembly, (Microbial infection) Interacts with hepatitis E virus protein ORF3. Monoubiquitinated at multiple sites by LRSAM1 and by MGRN1. Ubiquitination inactivates it, possibly by regulating its shuttling between an active membrane-bound protein and an inactive soluble form. Ubiquitination by MGRN1 requires the presence of UBE2D1. In terms of tissue distribution, heart, brain, placenta, lung, liver, skeletal, kidney and pancreas.

It is found in the cytoplasm. The protein resides in the early endosome membrane. It localises to the late endosome membrane. Its subcellular location is the cytoskeleton. The protein localises to the microtubule organizing center. It is found in the centrosome. The protein resides in the midbody. It localises to the midbody ring. Its subcellular location is the nucleus. Functionally, component of the ESCRT-I complex, a regulator of vesicular trafficking process. Binds to ubiquitinated cargo proteins and is required for the sorting of endocytic ubiquitinated cargos into multivesicular bodies (MVBs). Mediates the association between the ESCRT-0 and ESCRT-I complex. Required for completion of cytokinesis; the function requires CEP55. May be involved in cell growth and differentiation. Acts as a negative growth regulator. Involved in the budding of many viruses through an interaction with viral proteins that contain a late-budding motif P-[ST]-A-P. This interaction is essential for viral particle budding of numerous retroviruses. Required for the exosomal release of SDCBP, CD63 and syndecan. It may also play a role in the extracellular release of microvesicles that differ from the exosomes. In Homo sapiens (Human), this protein is Tumor susceptibility gene 101 protein (TSG101).